The chain runs to 25 residues: GLVSSIGKALGGLLADVVKSKGQPA.

As to expression, expressed by the skin parotoid and/or rostral glands.

It localises to the secreted. Functionally, acts as a male sex pheromone that attracts females. Has no antimicrobial activity. This chain is Caerin-2.3, found in Ranoidea caerulea (Green tree frog).